The sequence spans 337 residues: Adenylosuccinate synthetase (337 aa).

GTP contacts are provided by residues 12 to 18 and 42 to 44; these read GDEGKGK and GHT. D13 acts as the Proton acceptor in catalysis. 2 residues coordinate Mg(2+): D13 and G42. Residues 13–16, 40–43, T127, R141, Q179, T194, and R256 contribute to the IMP site; these read DEGK and NAGH. H43 functions as the Proton donor in the catalytic mechanism. Position 252–258 (252–258) interacts with substrate; sequence TVTGRRR. Residues R258, 284-286, and 324-326 each bind GTP; these read CLD and STG.

It belongs to the adenylosuccinate synthetase family. As to quaternary structure, homodimer. Mg(2+) serves as cofactor.

The protein localises to the cytoplasm. The enzyme catalyses IMP + L-aspartate + GTP = N(6)-(1,2-dicarboxyethyl)-AMP + GDP + phosphate + 2 H(+). The protein operates within purine metabolism; AMP biosynthesis via de novo pathway; AMP from IMP: step 1/2. Functionally, plays an important role in the de novo pathway of purine nucleotide biosynthesis. Catalyzes the first committed step in the biosynthesis of AMP from IMP. This is Adenylosuccinate synthetase from Methanococcus maripaludis (strain C5 / ATCC BAA-1333).